Here is a 463-residue protein sequence, read N- to C-terminus: Protein phosphatase PP2A regulatory subunit B (463 aa).

2 WD repeats span residues 27–66 and 87–128; these read TEAD…KGCE and EIEE…LKVV. Ser-134 carries the phosphoserine modification. 4 WD repeats span residues 174 to 212, 223 to 263, 282 to 320, and 337 to 378; these read AHAY…HSFN, ELTE…LCDN, EIIS…APVK, and ENDC…PGDR.

The protein belongs to the phosphatase 2A regulatory subunit B family. As to quaternary structure, PP2A exists in several trimeric forms, all of which consist of a core composed of a catalytic subunit associated with a 65 kDa (PR65) (Subunit A) and a 55 kDa (PR55) (Subunit B) regulatory subunit.

Phosphatase 2A affects a variety of biological processes in the cell such as transcription, cell cycle progression and cellular morphogenesis, and provides an initial identification of critical substrates for this phosphatase. The regulatory subunit may direct the catalytic subunit to distinct, albeit overlapping, subsets of substrates. The protein is Protein phosphatase PP2A regulatory subunit B (pab1) of Schizosaccharomyces pombe (strain 972 / ATCC 24843) (Fission yeast).